The sequence spans 335 residues: Tetraacyldisaccharide 4'-kinase (335 aa).

58-65 (VVGGSGKT) contacts ATP.

The protein belongs to the LpxK family.

The enzyme catalyses a lipid A disaccharide + ATP = a lipid IVA + ADP + H(+). Its pathway is glycolipid biosynthesis; lipid IV(A) biosynthesis; lipid IV(A) from (3R)-3-hydroxytetradecanoyl-[acyl-carrier-protein] and UDP-N-acetyl-alpha-D-glucosamine: step 6/6. Transfers the gamma-phosphate of ATP to the 4'-position of a tetraacyldisaccharide 1-phosphate intermediate (termed DS-1-P) to form tetraacyldisaccharide 1,4'-bis-phosphate (lipid IVA). The sequence is that of Tetraacyldisaccharide 4'-kinase from Hydrogenovibrio crunogenus (strain DSM 25203 / XCL-2) (Thiomicrospira crunogena).